A 273-amino-acid chain; its full sequence is Eukaryotic translation initiation factor 3 subunit G-2 (273 aa).

Residues 165–193 form a disordered region; the sequence is KYVPPFMKDGGGGPGGKNWGRGRERDDSS. Residues 173-183 show a composition bias toward gly residues; the sequence is DGGGGPGGKNW. The RRM domain maps to 193–271; sequence SAVRISNLSE…LILCVEWSKP (79 aa).

The protein belongs to the eIF-3 subunit G family. In terms of assembly, component of the eukaryotic translation initiation factor 3 (eIF-3) complex. The eIF-3 complex interacts with pix.

Its subcellular location is the cytoplasm. In terms of biological role, RNA-binding component of the eukaryotic translation initiation factor 3 (eIF-3) complex, which is involved in protein synthesis of a specialized repertoire of mRNAs and, together with other initiation factors, stimulates binding of mRNA and methionyl-tRNAi to the 40S ribosome. The eIF-3 complex specifically targets and initiates translation of a subset of mRNAs involved in cell proliferation. This subunit can bind 18S rRNA. The protein is Eukaryotic translation initiation factor 3 subunit G-2 of Drosophila yakuba (Fruit fly).